The primary structure comprises 81 residues: Acyl carrier protein (81 aa).

The Carrier domain maps to 5-80; it reads EEIFSKVKSI…DIVSYIEKKL (76 aa). O-(pantetheine 4'-phosphoryl)serine is present on Ser40.

It belongs to the acyl carrier protein (ACP) family. In terms of processing, 4'-phosphopantetheine is transferred from CoA to a specific serine of apo-ACP by AcpS. This modification is essential for activity because fatty acids are bound in thioester linkage to the sulfhydryl of the prosthetic group.

The protein resides in the cytoplasm. It functions in the pathway lipid metabolism; fatty acid biosynthesis. Functionally, carrier of the growing fatty acid chain in fatty acid biosynthesis. This chain is Acyl carrier protein, found in Thermotoga maritima (strain ATCC 43589 / DSM 3109 / JCM 10099 / NBRC 100826 / MSB8).